Reading from the N-terminus, the 853-residue chain is Thrombospondin type-1 domain-containing protein 1 (853 aa).

An N-terminal signal peptide occupies residues 1-24; the sequence is MKPMLKDFSNLLLVVLCDYVLGEA. Topologically, residues 25–414 are extracellular; sequence EYLLLREPGH…QPQGPVKSNN (390 aa). N-linked (GlcNAc...) asparagine glycosylation is found at asparagine 39, asparagine 53, asparagine 58, asparagine 69, asparagine 80, asparagine 135, and asparagine 304. The TSP type-1 domain maps to 341–394; it reads IETWGLWQPWSQCSATCGDGVRERRRVCLTSFPSRPGCPGMSLEASLCSLEECA. Cystine bridges form between cysteine 353/cysteine 388, cysteine 357/cysteine 393, and cysteine 368/cysteine 378. Residues 415–435 form a helical membrane-spanning segment; that stretch reads IVTVTGISLCLFIIIATVLIT. At 436-853 the chain is on the cytoplasmic side; the sequence is LWRRFGRPAK…STLSVEKLVI (418 aa). Disordered stretches follow at residues 445 to 518, 624 to 650, 668 to 702, and 714 to 800; these read KCST…ESFQ, TLIRKSQARHVGSRGGPSERSHARNAH, ERSMSTLTPRQAPAYSTRTRTCEQAEDRFRPQSRG, and QEAS…RKDK. The residue at position 464 (serine 464) is a Phosphoserine. Residues 671–686 are compositionally biased toward polar residues; that stretch reads MSTLTPRQAPAYSTRT. Positions 687-697 are enriched in basic and acidic residues; the sequence is RTCEQAEDRFR. A compositionally biased stretch (polar residues) spans 767 to 795; that stretch reads SHKSVSRKQSSPTSPKDSYQRVSPLSPSQ.

Part of a complex composed of THSD1, PTK2/FAK1, TLN1 and VCL. Interacts with TLN1.

Its subcellular location is the endosome membrane. The protein resides in the cell junction. It localises to the focal adhesion. Its function is as follows. Is a positive regulator of nascent focal adhesion assembly, involved in the modulation of endothelial cell attachment to the extracellular matrix. In Pongo abelii (Sumatran orangutan), this protein is Thrombospondin type-1 domain-containing protein 1 (THSD1).